The following is a 395-amino-acid chain: Phosphoglycerate kinase (395 aa).

Substrate-binding positions include 21-23, Arg-36, 59-62, Arg-114, and Arg-147; these read DLN and HLGR. Residues Lys-198, Glu-320, and 346–349 each bind ATP; that span reads GGDT.

This sequence belongs to the phosphoglycerate kinase family. As to quaternary structure, monomer.

It localises to the cytoplasm. The enzyme catalyses (2R)-3-phosphoglycerate + ATP = (2R)-3-phospho-glyceroyl phosphate + ADP. It functions in the pathway carbohydrate degradation; glycolysis; pyruvate from D-glyceraldehyde 3-phosphate: step 2/5. The protein is Phosphoglycerate kinase of Nitrosospira multiformis (strain ATCC 25196 / NCIMB 11849 / C 71).